Reading from the N-terminus, the 311-residue chain is 2-dehydro-3-deoxygluconokinase (311 aa).

Substrate is bound by residues 34 to 35, 106 to 108, and Arg-166; these read GS and YYR. ATP contacts are provided by residues 164-166, 224-229, 253-256, and Ser-283; these read NIR, KLGPKG, and GAGD. Gly-253 and Asp-256 together coordinate substrate. Catalysis depends on Asp-256, which acts as the Proton acceptor. Position 292 (Asp-292) interacts with substrate.

It belongs to the carbohydrate kinase PfkB family. Homotetramer. A divalent metal cation serves as cofactor.

The catalysed reaction is 2-dehydro-3-deoxy-D-gluconate + ATP = 2-dehydro-3-deoxy-6-phospho-D-gluconate + ADP + H(+). It participates in carbohydrate acid metabolism; 2-dehydro-3-deoxy-D-gluconate degradation; D-glyceraldehyde 3-phosphate and pyruvate from 2-dehydro-3-deoxy-D-gluconate: step 1/2. Involved in the degradation of glucose via the semi-phosphorylative Entner-Doudoroff pathway. Catalyzes the phosphorylation of 2-keto-3-deoxygluconate (KDG) to produce 2-keto-3-deoxy-6-phosphogluconate (KDPG). Can also use GTP, but not ADP or AMP, as a phosphoryl donor and 2-keto-D-gluconate (KG) as a phosphoryl acceptor. In Sulfurisphaera tokodaii (strain DSM 16993 / JCM 10545 / NBRC 100140 / 7) (Sulfolobus tokodaii), this protein is 2-dehydro-3-deoxygluconokinase.